The following is a 596-amino-acid chain: MAARWAQFLLFSLLSLPQVYCEYGMVHVLSEKGSSKGKDYCILFNSQWAHLPHDLGKASLLQLQDQTASVLCSPSDVPDGGFNNRIPMVMRGNCTFYEKVRLAQINGARGLLIVSRERLVPPGGNRSQYEEIDIPVALLSYSDMLDIVKSFGRSVKGAMYAPNEPVLDYNMVIIFVMAVGTVAIGGYWAGSRDVKERYMKHKRDDGAEKHEDETVDVTPIMICVFVVMCCSMLVLLYFFYDHLVYVIIGIFCLAASIGLYSCLSPFVRRFPLGKCRIPDNNLPYFHKRPQVRILLLAVFCISVSVVWGVFRNEDQWAWVLQDALGIAFCLYMLKTIRLPTFKGCTLLLLVLFVYDVFFVFITPFLTKTGESIMVEVAAGPSDSATHEKLPMVLKVPRLNSSPLALCDRPFSLLGFGDILVPGLLVAYCHRFDIQVQSSRVYFVACTIAYGIGLLVTFVALALMQMGQPALLYLVPCTLITSFSVALWRKELAMFWTGSGFAKDLPQPPLVIASVNCPQLPKDSNVPASQQETEEMANPTLHVKELHSPTLAAEEPADNDTKTEQSEVSIAQSEEAAGHNKDDLESKSLNLEQKQLE.

A signal peptide spans 1–21; that stretch reads MAARWAQFLLFSLLSLPQVYC. Over 22–170 the chain is Lumenal; the sequence is EYGMVHVLSE…APNEPVLDYN (149 aa). A PA domain is found at 53–147; that stretch reads HDLGKASLLQ…LLSYSDMLDI (95 aa). N-linked (GlcNAc...) asparagine glycosylation occurs at Asn93. A helical transmembrane segment spans residues 171–191; sequence MVIIFVMAVGTVAIGGYWAGS. Residues 192 to 219 lie on the Cytoplasmic side of the membrane; that stretch reads RDVKERYMKHKRDDGAEKHEDETVDVTP. A helical membrane pass occupies residues 220-240; sequence IMICVFVVMCCSMLVLLYFFY. The Lumenal segment spans residues 241-242; the sequence is DH. The helical transmembrane segment at 243–263 threads the bilayer; it reads LVYVIIGIFCLAASIGLYSCL. Over 264 to 289 the chain is Cytoplasmic; the sequence is SPFVRRFPLGKCRIPDNNLPYFHKRP. Residues 290–310 form a helical membrane-spanning segment; it reads QVRILLLAVFCISVSVVWGVF. At 311-315 the chain is on the lumenal side; sequence RNEDQ. Residues 316–336 form a helical membrane-spanning segment; sequence WAWVLQDALGIAFCLYMLKTI. The Cytoplasmic segment spans residues 337–344; sequence RLPTFKGC. Residues 345–365 form a helical membrane-spanning segment; the sequence is TLLLLVLFVYDVFFVFITPFL. Asp355 is a catalytic residue. Residues 366–408 lie on the Lumenal side of the membrane; it reads TKTGESIMVEVAAGPSDSATHEKLPMVLKVPRLNSSPLALCDR. The chain crosses the membrane as a helical span at residues 409–429; the sequence is PFSLLGFGDILVPGLLVAYCH. Asp417 is an active-site residue. Topologically, residues 430-441 are cytoplasmic; it reads RFDIQVQSSRVY. Residues 442 to 462 traverse the membrane as a helical segment; sequence FVACTIAYGIGLLVTFVALAL. Residues 463-466 are Lumenal-facing; that stretch reads MQMG. The helical transmembrane segment at 467 to 487 threads the bilayer; sequence QPALLYLVPCTLITSFSVALW. The PAL motif lies at 468 to 470; it reads PAL. The Cytoplasmic segment spans residues 488 to 596; sequence RKELAMFWTG…SLNLEQKQLE (109 aa). The disordered stretch occupies residues 543–596; the sequence is KELHSPTLAAEEPADNDTKTEQSEVSIAQSEEAAGHNKDDLESKSLNLEQKQLE. A compositionally biased stretch (basic and acidic residues) spans 575–585; the sequence is AAGHNKDDLES. Polar residues predominate over residues 586–596; that stretch reads KSLNLEQKQLE.

The protein belongs to the peptidase A22B family.

It is found in the cell membrane. The protein localises to the golgi apparatus membrane. Its subcellular location is the lysosome membrane. The protein resides in the endosome membrane. It localises to the membrane. Functionally, intramembrane-cleaving aspartic protease (I-CLiP) that cleaves type II membrane signal peptides in the hydrophobic plane of the membrane. The protein is Signal peptide peptidase-like 2B of Gallus gallus (Chicken).